The primary structure comprises 496 residues: Fibronectin type III and SPRY domain-containing protein 1 (496 aa).

Residues 4-99 (QREALRKIIT…ALESSEELLE (96 aa)) are a coiled coil. The COS domain occupies 105–162 (LQAMDREDFPQAAKQIKDGVTMAPAFRLSLKAKVSDNMSHLMVDFAQERQMLQALKFL). The Fibronectin type-III domain occupies 164–268 (VPSAPVIDLA…EPVTLETPAF (105 aa)). The B30.2/SPRY domain maps to 268–477 (FMFRLDASTS…VTTGLQVPSS (210 aa)). Positions 301–336 (KAREKDGKGRTASPINSPARGTPSPKRMPSGRGGRD) are disordered. 2 positions are modified to omega-N-methylarginine: arginine 310 and arginine 320.

In terms of assembly, oligomerization is required for binding to microtubules.

The protein resides in the cytoplasm. It localises to the cytoskeleton. It is found in the microtubule organizing center. Its subcellular location is the centrosome. The protein localises to the nucleus. The protein resides in the cleavage furrow. Its function is as follows. May be involved in microtubule organization and stabilization. This Macaca fascicularis (Crab-eating macaque) protein is Fibronectin type III and SPRY domain-containing protein 1 (FSD1).